A 97-amino-acid chain; its full sequence is UPF0729 protein GD16342 (97 aa).

Positions 64–97 (KPEKASVGPAEESQNPPLNAIAAETEVDESKKEI) are disordered. A Phosphoserine modification is found at S69.

The protein belongs to the UPF0729 family.

The polypeptide is UPF0729 protein GD16342 (Drosophila simulans (Fruit fly)).